Reading from the N-terminus, the 224-residue chain is UPF0758 protein ABO_0214 (224 aa).

The region spanning 102–224 (PLDNPDKAGQ…WVSLASRGAV (123 aa)) is the MPN domain. Zn(2+)-binding residues include H173, H175, and D186. Positions 173 to 186 (HNHPSGVAEPSQSD) match the JAMM motif motif.

Belongs to the UPF0758 family.

The sequence is that of UPF0758 protein ABO_0214 from Alcanivorax borkumensis (strain ATCC 700651 / DSM 11573 / NCIMB 13689 / SK2).